A 505-amino-acid chain; its full sequence is MAVAELPNIVSTDSSPSPHPGSRLSSEPTDIESQKAPSNAEPKTDPNLVTWDGPDDPANPQNWSFAYRAFVTAIWVYGNLCTCIASSIFSSGSGQIAQRFHVGSTVVTLGISLFLLGYTVGPPVWGPLSERFGRKWPMVIGMALFTIFCIPVAVAKNLQTVLIGRFLTGVFGAAPLSLVGGSLVDMWNPAQRGVAMACCIGTIFGSPVLAPLMGNFIVESYLGWRFTQWLSCIMGGSCTVLVVFGLPETFAGSILRKKAAAIRKAGNPDVHTVYDGKQKGIKDIFVIFLLRPFALLVTEPILLLVTIYQAFIYGILYLVFVSYPIAFREVRGWSLGISALPYIGMMVGILIGCAIVVIQTRRNYDGNKAVVPEQRLPLMIAGGCLLPVGLFIFAWTSNPNIHWAGMVIGSAPVGTGMYMVFVQCLNYLVDVYPTIANSAIGANTFVRSFFGAGFPLFGPFMYHNLGVAWASSTLGFISIAMIPIPVLFYRYGARIRSWSKNSKHT.

A disordered region spans residues methionine 1–proline 54. Helical transmembrane passes span alanine 69–phenylalanine 89, valine 106–glycine 126, lysine 135–alanine 155, phenylalanine 166–methionine 186, glycine 193–methionine 213, phenylalanine 226–leucine 246, glycine 280–proline 300, isoleucine 301–valine 321, isoleucine 337–valine 357, leucine 376–threonine 396, isoleucine 401–phenylalanine 421, isoleucine 440–phenylalanine 460, and alanine 468–phenylalanine 488.

Belongs to the major facilitator superfamily. CAR1 family.

It localises to the membrane. In terms of biological role, MFS-type transporter; part of the gene cluster that mediates the biosynthesis of oryzines, natural products with an unusual maleidride backbone. The polypeptide is MFS-type transporter oryN (Aspergillus oryzae (strain ATCC 42149 / RIB 40) (Yellow koji mold)).